The sequence spans 238 residues: Purine nucleoside phosphorylase DeoD-type (238 aa).

Position 4 (histidine 4) interacts with a purine D-ribonucleoside. Phosphate contacts are provided by residues glycine 20, arginine 24, arginine 43, and arginine 87–serine 90. Residues glutamate 179–glutamate 181 and serine 203–aspartate 204 each bind a purine D-ribonucleoside. The active-site Proton donor is the aspartate 204.

It belongs to the PNP/UDP phosphorylase family. As to quaternary structure, homohexamer; trimer of homodimers.

It carries out the reaction a purine D-ribonucleoside + phosphate = a purine nucleobase + alpha-D-ribose 1-phosphate. The enzyme catalyses a purine 2'-deoxy-D-ribonucleoside + phosphate = a purine nucleobase + 2-deoxy-alpha-D-ribose 1-phosphate. Its function is as follows. Catalyzes the reversible phosphorolytic breakdown of the N-glycosidic bond in the beta-(deoxy)ribonucleoside molecules, with the formation of the corresponding free purine bases and pentose-1-phosphate. The protein is Purine nucleoside phosphorylase DeoD-type of Haemophilus influenzae (strain 86-028NP).